We begin with the raw amino-acid sequence, 509 residues long: Photosystem II CP47 reaction center protein (509 aa).

6 helical membrane-spanning segments follow: residues 21-36, 101-115, 140-156, 203-218, 237-252, and 457-472; these read AVHL…WAGS, IVLS…IWHW, GIHL…FGAF, IAAG…FHLT, VLSS…AFVT, and NFAL…HGSR.

This sequence belongs to the PsbB/PsbC family. PsbB subfamily. As to quaternary structure, PSII is composed of 1 copy each of membrane proteins PsbA, PsbB, PsbC, PsbD, PsbE, PsbF, PsbH, PsbI, PsbJ, PsbK, PsbL, PsbM, PsbT, PsbX, PsbY, PsbZ, Psb30/Ycf12, at least 3 peripheral proteins of the oxygen-evolving complex and a large number of cofactors. It forms dimeric complexes. Binds multiple chlorophylls. PSII binds additional chlorophylls, carotenoids and specific lipids. is required as a cofactor.

Its subcellular location is the plastid. It is found in the chloroplast thylakoid membrane. In terms of biological role, one of the components of the core complex of photosystem II (PSII). It binds chlorophyll and helps catalyze the primary light-induced photochemical processes of PSII. PSII is a light-driven water:plastoquinone oxidoreductase, using light energy to abstract electrons from H(2)O, generating O(2) and a proton gradient subsequently used for ATP formation. In Pyropia yezoensis (Susabi-nori), this protein is Photosystem II CP47 reaction center protein.